We begin with the raw amino-acid sequence, 331 residues long: MKQILYKLFEHQYLGRDEARTILQNIAQGKYNDAQVASLITVFLMRNISVEELCGFRDALLEMRVPVDLSEFAPIDIVGTGGDGKNTFNISTAACFTVAGAGFPVVKHGNYGATSVSGASNVMEQHGVKFTDHTDRLRRSMEKCNIAYLHAPLFNPALKAVAPIRKALAVRTFFNMLGPLVNPVIPTYQLLGVYNLPLLRLYTYTYQESATRFAVVHSLDGYDEISLTDEFKVATCGNEKIYTPESLGFNRCRESELDGGNTPEDAARIFDAVMEGTATEAQKNVVIVNAAFAIRVICPEKPIEECIALARESLESGKARETLKKFVELNG.

Residues Gly-79, Gly-82 to Asp-83, Thr-87, Asn-89 to Thr-92, Lys-107 to Ser-115, and Ala-119 contribute to the 5-phospho-alpha-D-ribose 1-diphosphate site. Position 79 (Gly-79) interacts with anthranilate. Residue Ser-91 participates in Mg(2+) binding. An anthranilate-binding site is contributed by Asn-110. Arg-165 is an anthranilate binding site. Asp-223 and Glu-224 together coordinate Mg(2+).

It belongs to the anthranilate phosphoribosyltransferase family. In terms of assembly, homodimer. The cofactor is Mg(2+).

It carries out the reaction N-(5-phospho-beta-D-ribosyl)anthranilate + diphosphate = 5-phospho-alpha-D-ribose 1-diphosphate + anthranilate. The protein operates within amino-acid biosynthesis; L-tryptophan biosynthesis; L-tryptophan from chorismate: step 2/5. Its function is as follows. Catalyzes the transfer of the phosphoribosyl group of 5-phosphorylribose-1-pyrophosphate (PRPP) to anthranilate to yield N-(5'-phosphoribosyl)-anthranilate (PRA). This is Anthranilate phosphoribosyltransferase from Bacteroides fragilis (strain YCH46).